The chain runs to 140 residues: Nucleoside diphosphate kinase (140 aa).

ATP is bound by residues Lys-11, Phe-59, Arg-87, Thr-93, Arg-104, and Asn-114. His-117 (pros-phosphohistidine intermediate) is an active-site residue.

It belongs to the NDK family. In terms of assembly, homotetramer. Mg(2+) serves as cofactor.

The protein localises to the cytoplasm. The catalysed reaction is a 2'-deoxyribonucleoside 5'-diphosphate + ATP = a 2'-deoxyribonucleoside 5'-triphosphate + ADP. It carries out the reaction a ribonucleoside 5'-diphosphate + ATP = a ribonucleoside 5'-triphosphate + ADP. In terms of biological role, major role in the synthesis of nucleoside triphosphates other than ATP. The ATP gamma phosphate is transferred to the NDP beta phosphate via a ping-pong mechanism, using a phosphorylated active-site intermediate. The polypeptide is Nucleoside diphosphate kinase (Jannaschia sp. (strain CCS1)).